A 303-amino-acid chain; its full sequence is Quinolinate synthase (303 aa).

Residues His-23 and Ser-40 each contribute to the iminosuccinate site. Cys-85 contacts [4Fe-4S] cluster. Iminosuccinate-binding positions include 111–113 and Ser-128; that span reads YIN. A [4Fe-4S] cluster-binding site is contributed by Cys-171. Iminosuccinate is bound by residues 197 to 199 and Thr-214; that span reads HPE. Cys-259 contributes to the [4Fe-4S] cluster binding site.

The protein belongs to the quinolinate synthase family. Type 2 subfamily. Requires [4Fe-4S] cluster as cofactor.

The protein localises to the cytoplasm. The catalysed reaction is iminosuccinate + dihydroxyacetone phosphate = quinolinate + phosphate + 2 H2O + H(+). Its pathway is cofactor biosynthesis; NAD(+) biosynthesis; quinolinate from iminoaspartate: step 1/1. Functionally, catalyzes the condensation of iminoaspartate with dihydroxyacetone phosphate to form quinolinate. In Clostridium acetobutylicum (strain ATCC 824 / DSM 792 / JCM 1419 / IAM 19013 / LMG 5710 / NBRC 13948 / NRRL B-527 / VKM B-1787 / 2291 / W), this protein is Quinolinate synthase.